Reading from the N-terminus, the 407-residue chain is Polygalacturonase (407 aa).

The N-terminal stretch at 1 to 26 (MAPHLNIVPSMFVLLLLFISASKVQS) is a signal peptide. PbH1 repeat units follow at residues 180–206 (CKNI…HMGK) and 207–228 (SEGV…SIGD). N-linked (GlcNAc...) asparagine glycosylation is present at Asn-182. Asp-221 (proton donor) is an active-site residue. Cys-223 and Cys-240 are joined by a disulfide. His-244 is an active-site residue. PbH1 repeat units follow at residues 260–281 (VEGI…RIKT) and 290–311 (VSEI…LIDQ). Asn-267, Asn-272, Asn-302, and Asn-331 each carry an N-linked (GlcNAc...) asparagine glycan. 2 disulfide bridges follow: Cys-351–Cys-357 and Cys-379–Cys-395. The PbH1 5 repeat unit spans residues 357-384 (CQNVELADIDIKHNGAEPATSQCLNVKP).

This sequence belongs to the glycosyl hydrolase 28 family. As to expression, pollen.

Its subcellular location is the secreted. The protein localises to the cell wall. The catalysed reaction is (1,4-alpha-D-galacturonosyl)n+m + H2O = (1,4-alpha-D-galacturonosyl)n + (1,4-alpha-D-galacturonosyl)m.. Its function is as follows. May function in the depolymerization of the pectin in its walls during pollen tube elongation, or in that of the pistil during pollination. This chain is Polygalacturonase (G9), found in Gossypium hirsutum (Upland cotton).